Reading from the N-terminus, the 155-residue chain is uncharacterized protein (155 aa).

2 disordered regions span residues 24 to 63 (RVGYREGPTVETKKIQPQLPDEDGNESDKEDEQPQVVVLK) and 80 to 155 (KAAK…DENE). A compositionally biased stretch (acidic residues) spans 43–56 (PDEDGNESDKEDEQ). S50 carries the phosphoserine modification. K108 is modified (N6-acetyllysine). Polar residues predominate over residues 128–147 (KQSPVRKNSQKQIKNSSLLS). 3 positions are modified to phosphoserine: S130, S147, and S150.

This is an uncharacterized protein from Rattus norvegicus (Rat).